Reading from the N-terminus, the 309-residue chain is (S)-sulfolactate dehydrogenase (309 aa).

NAD(+) contacts are provided by residues 151–152, D171, 231–233, and D257; these read GI and TAR. R233 is an active-site residue. E262 is an active-site residue. H281 acts as the Proton donor in catalysis. 281-284 provides a ligand contact to NAD(+); the sequence is HIAG.

It belongs to the D-isomer specific 2-hydroxyacid dehydrogenase family.

It carries out the reaction (2S)-3-sulfolactate + NAD(+) = 3-sulfopyruvate + NADH + H(+). Dehydrogenase of the (R,S)-sulfolactate degradation pathway that only acts on the (S)-enantiomer of 3-sulfolactate. Together with ComC, provides a racemase system that converts (2S)-3-sulfolactate to (2R)-3-sulfolactate, which is degraded further by (2R)-sulfolactate sulfo-lyase. Specific for NAD. Also able to form sulfolactate from sulfopyruvate. This chain is (S)-sulfolactate dehydrogenase (slcC), found in Chromohalobacter salexigens (strain ATCC BAA-138 / DSM 3043 / CIP 106854 / NCIMB 13768 / 1H11).